Reading from the N-terminus, the 409-residue chain is Phosphatidylserine decarboxylase proenzyme, mitochondrial (409 aa).

The N-terminal 52 residues, 1 to 52 (MAASVCRPYVRSLPGVMPWRSSSCHYEYTAMHHFLGSFQKLPFEPFNTGARK), are a transit peptide targeting the mitochondrion. Residues 53–63 (IHTAPVRSLFL) are Mitochondrial matrix-facing. Residues 64–82 (LRPVPILLATGGGYAGYRQ) traverse the membrane as a helical segment. Topologically, residues 83–409 (YEKYRDQKLE…IRFGEALGSL (327 aa)) are mitochondrial intermembrane. Catalysis depends on charge relay system; for autoendoproteolytic cleavage activity residues D191, H267, and S378. S378 (schiff-base intermediate with substrate; via pyruvic acid; for decarboxylase activity) is an active-site residue. The residue at position 378 (S378) is a Pyruvic acid (Ser); by autocatalysis.

It belongs to the phosphatidylserine decarboxylase family. PSD-B subfamily. Eukaryotic type I sub-subfamily. As to quaternary structure, heterodimer of a large membrane-associated beta subunit and a small pyruvoyl-containing alpha subunit. It depends on pyruvate as a cofactor. Post-translationally, is synthesized initially as an inactive proenzyme. Formation of the active enzyme involves a self-maturation process in which the active site pyruvoyl group is generated from an internal serine residue via an autocatalytic post-translational modification. Two non-identical subunits are generated from the proenzyme in this reaction, and the pyruvate is formed at the N-terminus of the alpha chain, which is derived from the carboxyl end of the proenzyme. The autoendoproteolytic cleavage occurs by a canonical serine protease mechanism, in which the side chain hydroxyl group of the serine supplies its oxygen atom to form the C-terminus of the beta chain, while the remainder of the serine residue undergoes an oxidative deamination to produce ammonia and the pyruvoyl prosthetic group on the alpha chain. During this reaction, the Ser that is part of the protease active site of the proenzyme becomes the pyruvoyl prosthetic group, which constitutes an essential element of the active site of the mature decarboxylase.

It localises to the mitochondrion inner membrane. The protein localises to the cytoplasm. Its subcellular location is the lipid droplet. It catalyses the reaction a 1,2-diacyl-sn-glycero-3-phospho-L-serine + H(+) = a 1,2-diacyl-sn-glycero-3-phosphoethanolamine + CO2. It functions in the pathway phospholipid metabolism; phosphatidylethanolamine biosynthesis. Functionally, catalyzes the formation of phosphatidylethanolamine (PtdEtn) from phosphatidylserine (PtdSer). Plays a central role in phospholipid metabolism and in the interorganelle trafficking of phosphatidylserine. May be involved in lipid droplet biogenesis at the endoplasmic reticulum membrane. This chain is Phosphatidylserine decarboxylase proenzyme, mitochondrial, found in Cricetulus griseus (Chinese hamster).